Reading from the N-terminus, the 253-residue chain is DNA repair protein RecO (253 aa).

It belongs to the RecO family.

Functionally, involved in DNA repair and RecF pathway recombination. The chain is DNA repair protein RecO from Streptococcus agalactiae serotype III (strain NEM316).